Reading from the N-terminus, the 233-residue chain is Phosphoribosylformylglycinamidine synthase subunit PurQ (233 aa).

Residues 3 to 233 form the Glutamine amidotransferase type-1 domain; sequence AAILVFPGIN…GLAQHLEKAA (231 aa). C87 serves as the catalytic Nucleophile. Active-site residues include H204 and E206.

As to quaternary structure, part of the FGAM synthase complex composed of 1 PurL, 1 PurQ and 2 PurS subunits.

The protein resides in the cytoplasm. The enzyme catalyses N(2)-formyl-N(1)-(5-phospho-beta-D-ribosyl)glycinamide + L-glutamine + ATP + H2O = 2-formamido-N(1)-(5-O-phospho-beta-D-ribosyl)acetamidine + L-glutamate + ADP + phosphate + H(+). It carries out the reaction L-glutamine + H2O = L-glutamate + NH4(+). It participates in purine metabolism; IMP biosynthesis via de novo pathway; 5-amino-1-(5-phospho-D-ribosyl)imidazole from N(2)-formyl-N(1)-(5-phospho-D-ribosyl)glycinamide: step 1/2. Functionally, part of the phosphoribosylformylglycinamidine synthase complex involved in the purines biosynthetic pathway. Catalyzes the ATP-dependent conversion of formylglycinamide ribonucleotide (FGAR) and glutamine to yield formylglycinamidine ribonucleotide (FGAM) and glutamate. The FGAM synthase complex is composed of three subunits. PurQ produces an ammonia molecule by converting glutamine to glutamate. PurL transfers the ammonia molecule to FGAR to form FGAM in an ATP-dependent manner. PurS interacts with PurQ and PurL and is thought to assist in the transfer of the ammonia molecule from PurQ to PurL. The chain is Phosphoribosylformylglycinamidine synthase subunit PurQ from Bradyrhizobium diazoefficiens (strain JCM 10833 / BCRC 13528 / IAM 13628 / NBRC 14792 / USDA 110).